The following is a 1205-amino-acid chain: Caskin-2 (1205 aa).

6 ANK repeats span residues 48-77 (DGFS…SVDI), 81-110 (NGMR…SVNA), 114-143 (DGQI…NPCH), 147-176 (GKKT…CVSL), 188-217 (NFTT…EINK), and 220-249 (KMGT…DVNI). In terms of domain architecture, SH3 spans 281 to 347 (SGILKVRALK…PPSIVEVISK (67 aa)). Composition is skewed to polar residues over residues 377-388 (SPGSQLGINPDT) and 398-411 (GSES…SGQS). Residues 377–411 (SPGSQLGINPDTSVAGDRHSVGSESSVRSAGSGQS) are disordered. SAM domains are found at residues 468–531 (KDAE…LIVA) and 537–601 (QIPV…LLDL). Residues 666-687 (RRSFSQESISSRSQGSGHSQES) show a composition bias toward low complexity. 4 disordered regions span residues 666 to 689 (RRSF…ESAS), 784 to 964 (RPGR…QRHL), 984 to 1054 (QIAA…SQEP), and 1132 to 1155 (SEAS…KGPP). Over residues 823-840 (SSMSSAEGQSPEGQSSVK) the composition is skewed to polar residues. A compositionally biased stretch (low complexity) spans 908–919 (ISSQHSSSESIP). Residues 942 to 959 (DATSELSPTQESQLQSAE) show a composition bias toward polar residues. Positions 1009 to 1037 (KNEEHDFNLTESDTVKRRPKVKEKEEESP) are enriched in basic and acidic residues. 2 stretches are compositionally biased toward polar residues: residues 1042-1054 (ANNS…SQEP) and 1137-1155 (REQT…KGPP).

The sequence is that of Caskin-2 (caskin2) from Xenopus laevis (African clawed frog).